A 277-amino-acid chain; its full sequence is 3-methyl-2-oxobutanoate hydroxymethyltransferase (277 aa).

Mg(2+)-binding residues include aspartate 43 and aspartate 82. Residues 43–44 (DS), aspartate 82, and lysine 112 each bind 3-methyl-2-oxobutanoate. Residue glutamate 114 participates in Mg(2+) binding. The active-site Proton acceptor is glutamate 181.

The protein belongs to the PanB family. Homodecamer; pentamer of dimers. Requires Mg(2+) as cofactor.

Its subcellular location is the cytoplasm. It carries out the reaction 3-methyl-2-oxobutanoate + (6R)-5,10-methylene-5,6,7,8-tetrahydrofolate + H2O = 2-dehydropantoate + (6S)-5,6,7,8-tetrahydrofolate. The protein operates within cofactor biosynthesis; (R)-pantothenate biosynthesis; (R)-pantoate from 3-methyl-2-oxobutanoate: step 1/2. In terms of biological role, catalyzes the reversible reaction in which hydroxymethyl group from 5,10-methylenetetrahydrofolate is transferred onto alpha-ketoisovalerate to form ketopantoate. The sequence is that of 3-methyl-2-oxobutanoate hydroxymethyltransferase from Listeria monocytogenes serovar 1/2a (strain ATCC BAA-679 / EGD-e).